We begin with the raw amino-acid sequence, 537 residues long: MELSLLRPTTQSLLPSFSKPNLRLNVYKPLRLRCSVAGGPTVGSSKIEGGGGTTITTDCVIVGGGISGLCIAQALATKHPDAAPNLIVTEAKDRVGGNIITREENGFLWEEGPNSFQPSDPMLTMVVDSGLKDDLVLGDPTAPRFVLWNGKLRPVPSKLTDLPFFDLMSIGGKIRAGFGALGIRPSPPGREESVEEFVRRNLGDEVFERLIEPFCSGVYAGDPSKLSMKAAFGKVWKLEQNGGSIIGGTFKAIQERKNAPKAERDPRLPKPQGQTVGSFRKGLRMLPEAISARLGSKVKLSWKLSGITKLESGGYNLTYETPDGLVSVQSKSVVMTVPSHVASGLLRPLSESAANALSKLYYPPVAAVSISYPKEAIRTECLIDGELKGFGQLHPRTQGVETLGTIYSSSLFPNRAPPGRILLLNYIGGSTNTGILSKSEGELVEAVDRDLRKMLIKPNSTDPLKLGVRVWPQAIPQFLVGHFDILDTAKSSLTSSGYEGLFLGGNYVAGVALGRCVEGAYETAIEVNNFMSRYAYK.

The N-terminal 34 residues, 1–34 (MELSLLRPTTQSLLPSFSKPNLRLNVYKPLRLRC), are a transit peptide targeting the chloroplast. The residue at position 35 (serine 35) is an N-acetylserine. Residues 63 to 68 (GGGISG), 90 to 91 (EA), and 112 to 115 (GPNS) each bind FAD. Residues 256–268 (RKNAPKAERDPRL) are compositionally biased toward basic and acidic residues. The disordered stretch occupies residues 256 to 275 (RKNAPKAERDPRLPKPQGQT). 511 to 513 (VAL) contributes to the FAD binding site.

It belongs to the protoporphyrinogen/coproporphyrinogen oxidase family. Protoporphyrinogen oxidase subfamily. Requires FAD as cofactor. In terms of tissue distribution, expressed at high levels in the leaves and at low levels in the roots and floral buds.

Its subcellular location is the plastid. The protein resides in the chloroplast. The enzyme catalyses protoporphyrinogen IX + 3 O2 = protoporphyrin IX + 3 H2O2. Its pathway is porphyrin-containing compound metabolism; protoporphyrin-IX biosynthesis; protoporphyrin-IX from protoporphyrinogen-IX: step 1/1. It participates in porphyrin-containing compound metabolism; chlorophyll biosynthesis. Its activity is regulated as follows. Inhibited by acifluorfen. In terms of biological role, catalyzes the 6-electron oxidation of protoporphyrinogen-IX to form protoporphyrin-IX. This is Protoporphyrinogen oxidase 1, chloroplastic (PPOX1) from Arabidopsis thaliana (Mouse-ear cress).